A 346-amino-acid polypeptide reads, in one-letter code: Queuosine 5'-phosphate N-glycosylase/hydrolase (346 aa).

The queuine site is built by H49, F243, D245, D310, and D315. Residue D245 is the Nucleophile or transition state stabilizer of the active site.

Belongs to the QNG1 protein family.

The enzyme catalyses queuosine 5'-phosphate + H2O = queuine + D-ribose 5-phosphate. In terms of biological role, catalyzes the hydrolysis of queuosine 5'-phosphate, releasing the nucleobase queuine (q). Is required for salvage of queuine from exogenous queuosine (Q) that is imported and then converted to queuosine 5'-phosphate intracellularly. The polypeptide is Queuosine 5'-phosphate N-glycosylase/hydrolase (Schizosaccharomyces pombe (strain 972 / ATCC 24843) (Fission yeast)).